The sequence spans 396 residues: Inositol polyphosphate 1-phosphatase (396 aa).

Asp54 contacts Li(+). Glu79 is a binding site for Mg(2+). Glu80 serves as a coordination point for Li(+). 2 residues coordinate Mg(2+): Asp153 and Ile155. 1D-myo-inositol 1,4-bisphosphate is bound by residues Asp156, Ser157, Thr158, Ser264, Lys266, Gly286, Ala287, Lys290, and Thr308. Mg(2+) is bound at residue Asp313. Ser314 carries the post-translational modification Phosphoserine.

Belongs to the inositol monophosphatase superfamily. In terms of assembly, monomer. Mg(2+) serves as cofactor.

The enzyme catalyses 1D-myo-inositol 1,4-bisphosphate + H2O = 1D-myo-inositol 4-phosphate + phosphate. It catalyses the reaction 1D-myo-inositol 1,3,4-trisphosphate + H2O = 1D-myo-inositol 3,4-bisphosphate + phosphate. Its pathway is signal transduction; phosphatidylinositol signaling pathway. With respect to regulation, inhibited by Li(+). In terms of biological role, mg(2+)-dependent phosphatase that catalyzes the hydrolysis of the 1-position phosphate from inositol 1,4-bisphosphate and inositol 1,3,4-trisphosphate and participates in inositol phosphate metabolism. This Mus musculus (Mouse) protein is Inositol polyphosphate 1-phosphatase.